The sequence spans 269 residues: NAD kinase (269 aa).

D45 serves as the catalytic Proton acceptor. NAD(+) contacts are provided by residues 45–46 (DG), 122–123 (NE), R149, D151, and A186.

Belongs to the NAD kinase family. It depends on a divalent metal cation as a cofactor.

The protein resides in the cytoplasm. The catalysed reaction is NAD(+) + ATP = ADP + NADP(+) + H(+). In terms of biological role, involved in the regulation of the intracellular balance of NAD and NADP, and is a key enzyme in the biosynthesis of NADP. Catalyzes specifically the phosphorylation on 2'-hydroxyl of the adenosine moiety of NAD to yield NADP. The chain is NAD kinase from Staphylococcus aureus (strain Mu3 / ATCC 700698).